Here is a 342-residue protein sequence, read N- to C-terminus: Ketol-acid reductoisomerase (NADP(+)) (342 aa).

Positions 2–181 (VKVYYNGDIQ…GGARAGVLET (180 aa)) constitute a KARI N-terminal Rossmann domain. NADP(+) contacts are provided by residues 25–28 (YGSQ), arginine 48, serine 52, and 82–85 (DEQQ). The active site involves histidine 107. Glycine 133 contacts NADP(+). One can recognise a KARI C-terminal knotted domain in the interval 182–327 (TFKEETETDL…RKLREMMPFV (146 aa)). The Mg(2+) site is built by aspartate 190, glutamate 194, glutamate 226, and glutamate 230. Serine 251 is a binding site for substrate.

Belongs to the ketol-acid reductoisomerase family. The cofactor is Mg(2+).

The catalysed reaction is (2R)-2,3-dihydroxy-3-methylbutanoate + NADP(+) = (2S)-2-acetolactate + NADPH + H(+). It carries out the reaction (2R,3R)-2,3-dihydroxy-3-methylpentanoate + NADP(+) = (S)-2-ethyl-2-hydroxy-3-oxobutanoate + NADPH + H(+). It participates in amino-acid biosynthesis; L-isoleucine biosynthesis; L-isoleucine from 2-oxobutanoate: step 2/4. It functions in the pathway amino-acid biosynthesis; L-valine biosynthesis; L-valine from pyruvate: step 2/4. In terms of biological role, involved in the biosynthesis of branched-chain amino acids (BCAA). Catalyzes an alkyl-migration followed by a ketol-acid reduction of (S)-2-acetolactate (S2AL) to yield (R)-2,3-dihydroxy-isovalerate. In the isomerase reaction, S2AL is rearranged via a Mg-dependent methyl migration to produce 3-hydroxy-3-methyl-2-ketobutyrate (HMKB). In the reductase reaction, this 2-ketoacid undergoes a metal-dependent reduction by NADPH to yield (R)-2,3-dihydroxy-isovalerate. This is Ketol-acid reductoisomerase (NADP(+)) from Bacillus pumilus (strain SAFR-032).